A 186-amino-acid polypeptide reads, in one-letter code: Spermidine N(1)-acetyltransferase (186 aa).

Residues 7 to 167 form the N-acetyltransferase domain; that stretch reads VKLRPLERED…NAIRMCIFQH (161 aa). Residues Met-30, Glu-35, Glu-43, and 51 to 54 contribute to the spermine site; that span reads HIHD. Glu-35 serves as a coordination point for Mg(2+). Glu-35 and Glu-43 together coordinate spermidine. Position 76 (Glu-76) interacts with Mg(2+). 85-87 lines the spermine pocket; it reads EFQ. Residues 88-90, 95-101, and 128-137 contribute to the acetyl-CoA site; these read III, QGKGLAT, and NEKAIHIYRK. Tyr-135 (proton donor) is an active-site residue.

The protein belongs to the acetyltransferase family. As to quaternary structure, homododecamer.

The protein resides in the cytoplasm. It catalyses the reaction an alkane-alpha,omega-diamine + acetyl-CoA = an N-acetylalkane-alpha,omega-diamine + CoA + H(+). The catalysed reaction is spermidine + acetyl-CoA = N(1)-acetylspermidine + CoA + H(+). It carries out the reaction spermidine + acetyl-CoA = N(8)-acetylspermidine + CoA + H(+). The enzyme catalyses spermine + acetyl-CoA = N(1)-acetylspermine + CoA + H(+). The protein operates within amine and polyamine degradation; spermidine degradation. Its pathway is amine and polyamine degradation; spermine degradation. In terms of biological role, involved in the protection against polyamine toxicity by regulating their concentration. Catalyzes the transfer of an acetyl group from acetyl coenzyme A (AcCoA) to the primary amino groups of spermidine to yield N(1)- and N(8)-acetylspermidine. It can also use spermine. The polypeptide is Spermidine N(1)-acetyltransferase (speG) (Escherichia coli O157:H7).